Consider the following 233-residue polypeptide: Large ribosomal subunit protein uL1 (233 aa).

It belongs to the universal ribosomal protein uL1 family. Part of the 50S ribosomal subunit.

Binds directly to 23S rRNA. The L1 stalk is quite mobile in the ribosome, and is involved in E site tRNA release. Functionally, protein L1 is also a translational repressor protein, it controls the translation of the L11 operon by binding to its mRNA. The sequence is that of Large ribosomal subunit protein uL1 from Brucella canis (strain ATCC 23365 / NCTC 10854 / RM-666).